Here is a 511-residue protein sequence, read N- to C-terminus: Bifunctional purine biosynthesis protein PurH (511 aa).

The MGS-like domain occupies 1–144 (MKTALLSVSD…KNFASVLPVV (144 aa)).

It belongs to the PurH family.

The catalysed reaction is (6R)-10-formyltetrahydrofolate + 5-amino-1-(5-phospho-beta-D-ribosyl)imidazole-4-carboxamide = 5-formamido-1-(5-phospho-D-ribosyl)imidazole-4-carboxamide + (6S)-5,6,7,8-tetrahydrofolate. It catalyses the reaction IMP + H2O = 5-formamido-1-(5-phospho-D-ribosyl)imidazole-4-carboxamide. It functions in the pathway purine metabolism; IMP biosynthesis via de novo pathway; 5-formamido-1-(5-phospho-D-ribosyl)imidazole-4-carboxamide from 5-amino-1-(5-phospho-D-ribosyl)imidazole-4-carboxamide (10-formyl THF route): step 1/1. The protein operates within purine metabolism; IMP biosynthesis via de novo pathway; IMP from 5-formamido-1-(5-phospho-D-ribosyl)imidazole-4-carboxamide: step 1/1. This chain is Bifunctional purine biosynthesis protein PurH, found in Pediococcus pentosaceus (strain ATCC 25745 / CCUG 21536 / LMG 10740 / 183-1w).